We begin with the raw amino-acid sequence, 378 residues long: Putative aminoglycoside phosphotransferase (378 aa).

ATP contacts are provided by residues R79 and 134 to 136 (DYV). D249 acts as the Proton acceptor in catalysis. Positions 254, 267, and 269 each coordinate Mg(2+).

The protein belongs to the aminoglycoside phosphotransferase family.

In terms of biological role, might catalyze the phosphorylation of aminoglycosides and confer aminoglycoside antibiotics resistance. This Mycobacterium tuberculosis (strain CDC 1551 / Oshkosh) protein is Putative aminoglycoside phosphotransferase.